Reading from the N-terminus, the 614-residue chain is ATP-dependent zinc metalloprotease FtsH (614 aa).

Over 1–7 the chain is Stromal; the sequence is MKKQWKK. Residues 8–28 traverse the membrane as a helical segment; the sequence is IVLFVLPVIITLITLSSFLFY. Topologically, residues 29 to 116 are lumenal; sequence NQDVVHNWSS…AHPSSSNVNL (88 aa). The helical transmembrane segment at 117–137 threads the bilayer; it reads VSWLSNLLLPLILIITLFFFF. The Stromal segment spans residues 138–614; that stretch reads RRGNKSSSGP…EFMRIVEERV (477 aa). 211 to 218 contacts ATP; it reads GPPGTGKT. A Zn(2+)-binding site is contributed by histidine 432. Glutamate 433 is an active-site residue. Residues histidine 436 and aspartate 510 each coordinate Zn(2+).

This sequence in the central section; belongs to the AAA ATPase family. The protein in the C-terminal section; belongs to the peptidase M41 family. As to quaternary structure, homohexamer. The cofactor is Zn(2+).

Its subcellular location is the plastid. The protein resides in the chloroplast thylakoid membrane. Functionally, acts as a processive, ATP-dependent zinc metallopeptidase. This is ATP-dependent zinc metalloprotease FtsH from Cyanidium caldarium (Red alga).